The chain runs to 1030 residues: MSNLLRDFEVEAKNPSLEARQRWRSSVSIVKNRTRRFRNIRDLDKLADYENKKHQIQEKIRVAFFVQKAALHFIDAAARPEYKLTDEVKKAGFSIEADELASMVRKNDTKSLAQKGGVEELAKKVSVSLSEGIRSSEVPIREKIFGENRYTEKPARSFLMFVWEALHDITLIILMVCAVVSIGVGVATEGFPRGMYDGTGILLSILLVVMVTAISDYKQSLQFRDLDREKKKIIVQVTRDGSRQEISIHDLVVGDVVHLSIGDQVPADGIFISGYNLEIDESSLSGESEPSHVNKEKPFLLSGTKVQNGSAKMLVTTVGMRTEWGKLMETLVDGGEDETPLQVKLNGVATIIGKIGLSFAVLTFVVLCIRFVLDKATSGSFTNWSSEDALTLLDYFAISVTIIVVAVPEGLPLAVTLSLAFAMKKLMSDRALVRHLAACETMGSSTCICTDKTGTLTTNHMVVNKVWICDKVQERQEGSKESFELELSEEVQSTLLQGIFQNTGSEVVKDKDGNTQILGSPTERAILEFGLLLGGDFNTQRKEHKILKIEPFNSDKKKMSVLIALPGGGARAFCKGASEIVLKMCENVVDSNGESVPLTEERITSISDIIEGFASEALRTLCLVYKDLDEAPSGELPDGGYTMVAVVGIKDPVRPGVREAVQTCQAAGITVRMVTGDNISTAKAIAKECGIYTEGGLAIEGSEFRDLSPHEMRAIIPKIQVMARSLPLDKHTLVSNLRKIGEVVAVTGDGTNDAPALHEADIGLAMGIAGTEVAKENADVIIMDDNFKTIVNVARWGRAVYINIQKFVQFQLTVNVVALIINFVSACITGSAPLTAVQLLWVNMIMDTLGALALATEPPNEGLMKRAPIARTASFITKTMWRNIAGQSVYQLIVLGILNFAGKSLLKLDGPDSTAVLNTVIFNSFVFCQVFNEINSREIEKINVFKGMFNSWVFTWVMTVTVVFQVIIVEFLGAFASTVPLSWQHWLLSILIGSLNMIVAVILKCVPVESRHHHDGYDLLPSGPSSSNSA.

Residues 1 to 157 (MSNLLRDFEV…NRYTEKPARS (157 aa)) are Cytoplasmic-facing. An interaction with calmodulin region spans residues 19 to 30 (ARQRWRSSVSIV). Position 28 is a phosphoserine (serine 28). Residues 158–178 (FLMFVWEALHDITLIILMVCA) form a helical membrane-spanning segment. Residues 179–196 (VVSIGVGVATEGFPRGMY) are Lumenal-facing. A helical membrane pass occupies residues 197–217 (DGTGILLSILLVVMVTAISDY). Residues 218-345 (KQSLQFRDLD…EDETPLQVKL (128 aa)) are Cytoplasmic-facing. The chain crosses the membrane as a helical span at residues 346-365 (NGVATIIGKIGLSFAVLTFV). Over 366-395 (VLCIRFVLDKATSGSFTNWSSEDALTLLDY) the chain is Lumenal. The chain crosses the membrane as a helical span at residues 396 to 413 (FAISVTIIVVAVPEGLPL). Residues 414 to 804 (AVTLSLAFAM…RWGRAVYINI (391 aa)) lie on the Cytoplasmic side of the membrane. Aspartate 451 functions as the 4-aspartylphosphate intermediate in the catalytic mechanism. Positions 749 and 753 each coordinate Mg(2+). A helical transmembrane segment spans residues 805–823 (QKFVQFQLTVNVVALIINF). Residues 824 to 834 (VSACITGSAPL) lie on the Lumenal side of the membrane. Residues 835–855 (TAVQLLWVNMIMDTLGALALA) traverse the membrane as a helical segment. Over 856 to 875 (TEPPNEGLMKRAPIARTASF) the chain is Cytoplasmic. Residues 876–898 (ITKTMWRNIAGQSVYQLIVLGIL) traverse the membrane as a helical segment. At 899–910 (NFAGKSLLKLDG) the chain is on the lumenal side. Residues 911-932 (PDSTAVLNTVIFNSFVFCQVFN) traverse the membrane as a helical segment. Over 933–950 (EINSREIEKINVFKGMFN) the chain is Cytoplasmic. Residues 951–972 (SWVFTWVMTVTVVFQVIIVEFL) traverse the membrane as a helical segment. Topologically, residues 973–982 (GAFASTVPLS) are lumenal. A helical membrane pass occupies residues 983 to 1004 (WQHWLLSILIGSLNMIVAVILK). Over 1005–1030 (CVPVESRHHHDGYDLLPSGPSSSNSA) the chain is Cytoplasmic.

Belongs to the cation transport ATPase (P-type) (TC 3.A.3) family. Type IIB subfamily.

Its subcellular location is the vacuole membrane. It carries out the reaction Ca(2+)(in) + ATP + H2O = Ca(2+)(out) + ADP + phosphate + H(+). Activated by calmodulin. Functionally, this magnesium-dependent enzyme catalyzes the hydrolysis of ATP coupled with the translocation of calcium from the cytosol into small vacuoles. In Arabidopsis thaliana (Mouse-ear cress), this protein is Calcium-transporting ATPase 4, plasma membrane-type (ACA4).